The sequence spans 617 residues: Neurosecretory protein VGF (617 aa).

Positions 1-23 are cleaved as a signal peptide; it reads MKTFTLPASVLFCFLLLIRGLGA. 4 disordered regions span residues 29–75, 94–113, 121–157, and 169–192; these read SDVY…GELF, PASPPAVPAGSQQGTPEEAA, VRSQTHSLPASEIQASAVAPPRPQTQDNDPEADDRSE, and LRDFSPSNAKRQQETAAAETETRT. Over residues 48–64 the composition is skewed to basic and acidic residues; sequence AVSRPKDDSVPEVRAAR. Residues 148–157 show a composition bias toward acidic residues; it reads NDPEADDRSE. Glutamine 180 is modified (pyrrolidone carboxylic acid). The segment covering 182-192 has biased composition (low complexity); sequence ETAAAETETRT. Glutamine 313 carries the pyrrolidone carboxylic acid modification. The interval 348-603 is disordered; that stretch reads DLGGRGLQET…AEERRLQEQE (256 aa). A compositionally biased stretch (acidic residues) spans 378–397; the sequence is EDEVGEEDEEAAEAEAEAEE. Residues 418 to 436 are compositionally biased toward basic and acidic residues; it reads AEDKRSQEEAPGHRRKDAE. Phosphoserine is present on serine 423. The segment covering 437–452 has biased composition (acidic residues); it reads GTEEGGEEDDDDEEMD. The span at 491–501 shows a compositional bias: pro residues; the sequence is PPEPVPPPRAA. The segment covering 577–601 has biased composition (basic and acidic residues); that stretch reads HHPDLEAQARRAQEEADAEERRLQE.

Interacts with HSPA8 on cell membrane. Interacts with C3AR1. Interacts with C1QBP. Post-translationally, multiple peptides are derived from VGF, with activities in synaptic plasticity, antidepression, penile erection, autonomic activation, and increases in energy expenditure. As to expression, central and peripheral nervous systems, synthesized exclusively in neuronal and neuroendocrine cells. VGF and several of the derived peptides are present in the brain.

The protein resides in the secreted. It localises to the cytoplasmic vesicle. The protein localises to the secretory vesicle. Secreted polyprotein that is packaged and proteolytically processed by prohormone convertases PCSK1 and PCSK2 in a cell-type-specific manner. VGF and peptides derived from its processing play many roles in neurogenesis and neuroplasticity associated with learning, memory, depression and chronic pain. Functionally, plays a role in the control of body fluid homeostasis by regulating vasopressin release. Suppresses presynaptic glutamatergic neurons connected to vasopressin neurons. In terms of biological role, plays a role in the control of body fluid homeostasis by regulating vasopressin release. Activates GABAergic interneurons which are inhibitory neurons of the nervous system and thereby suppresses presynaptic glutamatergic neurons. Also stimulates feeding behavior in an orexin-dependent manner in the hypothalamus. Functions as a positive regulator for the activation of orexin neurons resulting in elevated gastric acid secretion and gastric emptying. Its function is as follows. Secreted multifunctional neuropeptide that binds to different cell receptors and thereby plays multiple physiological roles including modulation of energy expenditure, pain, response to stress, gastric regulation, glucose homeostasis as well as lipolysis. Activates the G-protein-coupled receptor C3AR1 via a folding-upon-binding mechanism leading to enhanced lipolysis in adipocytes. Interacts with C1QBP receptor in macrophages and microglia causing increased levels of intracellular calcium and hypersensitivity. Plays a role in the regulation of memory formation and depression-related behaviors potentially by influencing synaptic plasticity and neurogenesis. Induces acute and transient activation of the NTRK2/TRKB receptor and subsequent CREB phosphorylation. Also induces insulin secretion in insulinoma cells by increasing intracellular calcium mobilization. The polypeptide is Neurosecretory protein VGF (Vgf) (Rattus norvegicus (Rat)).